A 381-amino-acid chain; its full sequence is Creatine kinase M-type (381 aa).

Positions 11 to 98 (KLNYSAAEEF…FDPVIEDRHG (88 aa)) constitute a Phosphagen kinase N-terminal domain. In terms of domain architecture, Phosphagen kinase C-terminal spans 125-367 (YVLSSRVRTG…KLMVEMEKRL (243 aa)). ATP contacts are provided by residues 128–132 (SSRVR), His-191, Arg-236, Arg-292, 320–325 (RGTGGV), and Asp-335.

Belongs to the ATP:guanido phosphotransferase family. In terms of assembly, dimer of identical or non-identical chains. With MM being the major form in skeletal muscle and myocardium, MB existing in myocardium, and BB existing in many tissues, especially brain.

It is found in the cytoplasm. It catalyses the reaction creatine + ATP = N-phosphocreatine + ADP + H(+). Functionally, reversibly catalyzes the transfer of phosphate between ATP and various phosphogens (e.g. creatine phosphate). Creatine kinase isoenzymes play a central role in energy transduction in tissues with large, fluctuating energy demands, such as skeletal muscle, heart, brain and spermatozoa. This is Creatine kinase M-type from Tetronarce californica (Pacific electric ray).